The following is a 184-amino-acid chain: Der GTPase-activating protein YihI (184 aa).

2 disordered regions span residues 1 to 106 (MNRP…PTMS) and 159 to 184 (LGDD…KDAL). Positions 8–32 (VADKAEKSKVKRKTREELEREARER) are enriched in basic and acidic residues. A compositionally biased stretch (acidic residues) spans 159–169 (LGDDDEEEQQE).

The protein belongs to the YihI family. As to quaternary structure, interacts with Der.

Its function is as follows. A GTPase-activating protein (GAP) that modifies Der/EngA GTPase function. May play a role in ribosome biogenesis. In Pectobacterium atrosepticum (strain SCRI 1043 / ATCC BAA-672) (Erwinia carotovora subsp. atroseptica), this protein is Der GTPase-activating protein YihI.